The primary structure comprises 292 residues: 4-hydroxy-tetrahydrodipicolinate synthase (292 aa).

Residue T45 participates in pyruvate binding. Y133 (proton donor/acceptor) is an active-site residue. Residue K162 is the Schiff-base intermediate with substrate of the active site. Residue I204 coordinates pyruvate.

It belongs to the DapA family. In terms of assembly, homotetramer; dimer of dimers.

The protein resides in the cytoplasm. The enzyme catalyses L-aspartate 4-semialdehyde + pyruvate = (2S,4S)-4-hydroxy-2,3,4,5-tetrahydrodipicolinate + H2O + H(+). It participates in amino-acid biosynthesis; L-lysine biosynthesis via DAP pathway; (S)-tetrahydrodipicolinate from L-aspartate: step 3/4. In terms of biological role, catalyzes the condensation of (S)-aspartate-beta-semialdehyde [(S)-ASA] and pyruvate to 4-hydroxy-tetrahydrodipicolinate (HTPA). This is 4-hydroxy-tetrahydrodipicolinate synthase from Maridesulfovibrio salexigens (strain ATCC 14822 / DSM 2638 / NCIMB 8403 / VKM B-1763) (Desulfovibrio salexigens).